Here is a 224-residue protein sequence, read N- to C-terminus: Proteasome subunit beta (224 aa).

Residues 1-6 (MDVMKG) constitute a propeptide, removed in mature form; by autocatalysis. Catalysis depends on threonine 7, which acts as the Nucleophile.

It belongs to the peptidase T1B family. The 20S proteasome core is composed of 14 alpha and 14 beta subunits that assemble into four stacked heptameric rings, resulting in a barrel-shaped structure. The two inner rings, each composed of seven catalytic beta subunits, are sandwiched by two outer rings, each composed of seven alpha subunits. The catalytic chamber with the active sites is on the inside of the barrel. Has a gated structure, the ends of the cylinder being occluded by the N-termini of the alpha-subunits. Is capped at one or both ends by the proteasome regulatory ATPase, PAN.

It localises to the cytoplasm. It carries out the reaction Cleavage of peptide bonds with very broad specificity.. With respect to regulation, the formation of the proteasomal ATPase PAN-20S proteasome complex, via the docking of the C-termini of PAN into the intersubunit pockets in the alpha-rings, triggers opening of the gate for substrate entry. Interconversion between the open-gate and close-gate conformations leads to a dynamic regulation of the 20S proteasome proteolysis activity. Its function is as follows. Component of the proteasome core, a large protease complex with broad specificity involved in protein degradation. The M.jannaschii proteasome is able to cleave oligopeptides after Glu, Asp, Tyr, Phe, Trp, slightly after Arg, but not after Ala. Thus, displays caspase-like and chymotrypsin-like activities and low level of trypsin-like activity. This is Proteasome subunit beta from Methanocaldococcus jannaschii (strain ATCC 43067 / DSM 2661 / JAL-1 / JCM 10045 / NBRC 100440) (Methanococcus jannaschii).